Here is a 416-residue protein sequence, read N- to C-terminus: Transmembrane protease serine 11B (416 aa).

At 1–17 (MYRHGISSQRSWPLWTT) the chain is on the cytoplasmic side. A helical; Signal-anchor for type II membrane protein transmembrane segment spans residues 18-38 (IFIFLGVAAILGVTIGLLVHF). Residues 39–416 (LAVEKTYYYQ…RNWITSKTGL (378 aa)) are Extracellular-facing. The SEA domain occupies 43 to 160 (KTYYYQGDFH…ASIKLMEISK (118 aa)). Residues asparagine 72 and asparagine 107 are each glycosylated (N-linked (GlcNAc...) asparagine). Positions 185 to 415 (IVNGKSSLEG…YRNWITSKTG (231 aa)) constitute a Peptidase S1 domain. Cysteine 210 and cysteine 226 are disulfide-bonded. Catalysis depends on charge relay system residues histidine 225 and aspartate 270. N-linked (GlcNAc...) asparagine glycosylation occurs at asparagine 315. Cystine bridges form between cysteine 335–cysteine 351 and cysteine 362–cysteine 391. Serine 366 serves as the catalytic Charge relay system.

This sequence belongs to the peptidase S1 family.

Its subcellular location is the cell membrane. Inhibited by aprotinin, leupeptin, benzamidine, SERPINA1, SPINT1 and SPINT2. Its function is as follows. Serine protease. The sequence is that of Transmembrane protease serine 11B (TMPRSS11B) from Homo sapiens (Human).